Here is a 404-residue protein sequence, read N- to C-terminus: Alpha-galactosidase A (404 aa).

A signal peptide spans 1 to 23; that stretch reads MRKQLLLGLGLVSALLVSVQASA. Disulfide bonds link Cys45-Cys77 and Cys124-Cys154. Asp152 functions as the Nucleophile in the catalytic mechanism. 185–189 provides a ligand contact to substrate; sequence EWGDN. Asp207 functions as the Proton donor in the catalytic mechanism.

Belongs to the glycosyl hydrolase 27 family.

The catalysed reaction is Hydrolysis of terminal, non-reducing alpha-D-galactose residues in alpha-D-galactosides, including galactose oligosaccharides, galactomannans and galactolipids.. Functionally, hydrolyzes galactomannan found in plant cell wall, by cleaving alpha-1,6-D-galactose side-chains from the mannan backbone. Appears to act in synergy with mannanase (ManA) to elicit hydrolysis of galactomannan. Has greater activity against galactomannans with decreased degree of polymerisation values. To a lesser extent, is also able to degrade other galactosides containing alpha-1,6-linked D-galactose, such as melibiose and stachyose. This chain is Alpha-galactosidase A (agaA), found in Cellvibrio japonicus (strain Ueda107) (Pseudomonas fluorescens subsp. cellulosa).